Reading from the N-terminus, the 409-residue chain is Elongation factor Tu, plastid (409 aa).

In terms of domain architecture, tr-type G spans 10-214; that stretch reads KPHINIGTIG…KIDSYIPTPI (205 aa). The interval 19 to 26 is G1; sequence GHVDHGKT. Residue 19–26 participates in GTP binding; the sequence is GHVDHGKT. Thr26 contacts Mg(2+). A G2 region spans residues 60–64; the sequence is GITIN. The interval 81 to 84 is G3; the sequence is DCPG. GTP contacts are provided by residues 81 to 85 and 136 to 139; these read DCPGH and NKED. Residues 136 to 139 are G4; sequence NKED. The tract at residues 174-176 is G5; the sequence is SAL.

Belongs to the TRAFAC class translation factor GTPase superfamily. Classic translation factor GTPase family. EF-Tu/EF-1A subfamily.

It localises to the plastid. It carries out the reaction GTP + H2O = GDP + phosphate + H(+). GTP hydrolase that promotes the GTP-dependent binding of aminoacyl-tRNA to the A-site of ribosomes during protein biosynthesis. The polypeptide is Elongation factor Tu, plastid (tufA) (Euglena longa (Euglenophycean alga)).